The sequence spans 367 residues: DNA replication and repair protein RecF (367 aa).

30–37 contacts ATP; it reads GDNAQGKT.

This sequence belongs to the RecF family.

It localises to the cytoplasm. Functionally, the RecF protein is involved in DNA metabolism; it is required for DNA replication and normal SOS inducibility. RecF binds preferentially to single-stranded, linear DNA. It also seems to bind ATP. This Clostridium beijerinckii (strain ATCC 51743 / NCIMB 8052) (Clostridium acetobutylicum) protein is DNA replication and repair protein RecF.